Reading from the N-terminus, the 513-residue chain is Putative BTB/POZ domain-containing protein L55 (513 aa).

In terms of domain architecture, BTB spans 11–83 (SPIKIILQDI…FHGYKMEISD (73 aa)).

Belongs to the mimivirus BTB/WD family.

In Acanthamoeba polyphaga (Amoeba), this protein is Putative BTB/POZ domain-containing protein L55.